Consider the following 250-residue polypeptide: Oil body-associated protein 2B (250 aa).

Residues 1 to 29 (MSSSDQNPAATPASSGPAEPSPPGRPTAV) form a disordered region. The segment covering 8-18 (PAATPASSGPA) has biased composition (low complexity).

The protein belongs to the OBAP family.

The polypeptide is Oil body-associated protein 2B (Zea mays (Maize)).